Reading from the N-terminus, the 257-residue chain is NAD kinase (257 aa).

Asp-46 serves as the catalytic Proton acceptor. Residues 46–47 (DG), 116–117 (NE), Asp-146, Ala-154, 157–162 (TAYNLS), and Asn-218 contribute to the NAD(+) site.

The protein belongs to the NAD kinase family. The cofactor is a divalent metal cation.

Its subcellular location is the cytoplasm. The catalysed reaction is NAD(+) + ATP = ADP + NADP(+) + H(+). Its function is as follows. Involved in the regulation of the intracellular balance of NAD and NADP, and is a key enzyme in the biosynthesis of NADP. Catalyzes specifically the phosphorylation on 2'-hydroxyl of the adenosine moiety of NAD to yield NADP. This chain is NAD kinase, found in Brucella melitensis biotype 1 (strain ATCC 23456 / CCUG 17765 / NCTC 10094 / 16M).